Consider the following 412-residue polypeptide: NF-kappa-B essential modulator (412 aa).

The disordered stretch occupies residues 1–48 (MSRHLWKNQLSEMVQPSGGPAEDQDMLGEESSLGKPAMLHLPSEQGTP). Residues 1-197 (MSRHLWKNQL…REVLQQQHSV (197 aa)) form a required for interaction with and ubiquitination by MARCHF2 region. Phosphoserine; by IKKB occurs at positions 31 and 43. Residues 44 to 111 (EQGTPETLQR…KLVERLSLEK (68 aa)) form an interaction with CHUK/IKBKB region. Positions 49–343 (ETLQRCLEEN…NKLKVGCHES (295 aa)) form a coiled coil. Residue S68 is modified to Phosphoserine. S85 bears the Phosphoserine; by ATM mark. Glycyl lysine isopeptide (Lys-Gly) (interchain with G-Cter in ubiquitin) cross-links involve residues K111, K139, K143, K226, and K246. The interval 150–250 (LGELQESQSR…YDSHIKSSKG (101 aa)) is interaction with TANK. The interval 242–343 (DSHIKSSKGM…NKLKVGCHES (102 aa)) is ubiquitin-binding (UBAN). Residues 246–358 (KSSKGMQLED…MRKRHVETSQ (113 aa)) are self-association. Residues 249–412 (KGMQLEDLRQ…LQIHVMECIE (164 aa)) form a required for interaction with TNFAIP3 region. K270 participates in a covalent cross-link: Glycyl lysine isopeptide (Lys-Gly) (interchain with G-Cter in SUMO); alternate. K270 participates in a covalent cross-link: Glycyl lysine isopeptide (Lys-Gly) (interchain with G-Cter in ubiquitin); alternate. Glycyl lysine isopeptide (Lys-Gly) (interchain with G-Cter in ubiquitin) cross-links involve residues K276, K278, K285, and K295. K302 participates in a covalent cross-link: Glycyl lysine isopeptide (Lys-Gly) (interchain with G-Cter in SUMO); alternate. K302 participates in a covalent cross-link: Glycyl lysine isopeptide (Lys-Gly) (interchain with G-Cter in ubiquitin); alternate. Residues K314 and K319 each participate in a glycyl lysine isopeptide (Lys-Gly) (interchain with G-Cter in ubiquitin) cross-link. The segment at 315-336 (LVERKELLQEQLEQLQREFNKL) is leucine-zipper. Residue S369 is modified to Phosphoserine; by IKKB. The tract at residues 375–412 (SNQRRSPPEEPPDFCCPKCQYQAPDMDTLQIHVMECIE) is interaction with CYLD. S380 is modified (phosphoserine). The CCHC NOA-type zinc finger occupies 382-412 (PEEPPDFCCPKCQYQAPDMDTLQIHVMECIE). C390 serves as a coordination point for Zn(2+). Residue K392 forms a Glycyl lysine isopeptide (Lys-Gly) (interchain with G-Cter in ubiquitin) linkage. Zn(2+) is bound by residues C393, H406, and C410.

Homodimer; disulfide-linked. Component of the I-kappa-B-kinase (IKK) core complex consisting of CHUK, IKBKB and IKBKG; probably four alpha/CHUK-beta/IKBKB dimers are associated with four gamma/IKBKG subunits. The IKK core complex seems to associate with regulatory or adapter proteins to form a IKK-signalosome holo-complex. The IKK complex associates with TERF2IP/RAP1, leading to promote IKK-mediated phosphorylation of RELA/p65. Part of a complex composed of NCOA2, NCOA3, CHUK/IKKA, IKBKB, IKBKG and CREBBP. Interacts with COPS3, CYLD, NALP2, TRPC4AP and PIDD1. Interacts with ATM; the complex is exported from the nucleus. Interacts with TRAF6. Interacts with IKBKE. Interacts with TANK; the interaction is enhanced by IKBKE and TBK1. Part of a ternary complex consisting of TANK, IKBKB and IKBKG. Interacts with ZFAND5. Interacts with RIPK2. Interacts with TNIP1 and TNFAIP3; TNIP1 facilitates the TNFAIP3-mediated de-ubiquitination of IKBKG. Interacts with TNFAIP3; the interaction is induced by TNF stimulation and by polyubiquitin. Binds (via UBAN region) polyubiquitin; binds both 'Lys-63'-linked and linear polyubiquitin, with higher affinity for linear ubiquitin. Interacts with NLRP10. Interacts with TANK; this interaction increases in response to DNA damage. Interacts with USP10; this interaction increases in response to DNA damage. Interacts with ZC3H12A; this interaction increases in response to DNA damage. Interacts with IFIT5; the interaction synergizes the recruitment of IKK to MAP3K7 and enhances IKK phosphorylation. Interacts with TRIM29; this interaction induces IKBKG/NEMO ubiquitination and proteolytic degradation. Interacts with TRIM13; this interaction leads to IKBKG/NEMO ubiquitination. Interacts with ARFIP2. Interacts with RIPK1. Interacts with (ubiquitinated) BCL10; interaction with polyubiquitinated BCL10 via both 'Lys-63'-linked and linear ubiquitin is required for TCR-induced NF-kappa-B activation. Interacts with MARCHF2; during the late stages of macrophage viral and bacterial infection; the interaction leads to ubiquitination and degradation of IKBKG/NEMO. In terms of processing, phosphorylation at Ser-68 attenuates aminoterminal homodimerization. Post-translationally, polyubiquitinated on Lys-278 via 'Lys-63'-linked ubiquitin; the ubiquitination is mediated downstream of NOD2 and RIPK2 and probably plays a role in signaling by facilitating interactions with ubiquitin domain-containing proteins and activates the NF-kappa-B pathway. Polyubiquitinated on Lys-278 and Lys-302 through 'Lys-63'-linked ubiquitin; the ubiquitination is mediated by BCL10, MALT1 and TRAF6 and probably plays a role in signaling by facilitating interactions with ubiquitin domain-containing proteins and activates the NF-kappa-B pathway. Monoubiquitinated on Lys-270 and Lys-302; promotes nuclear export. Polyubiquitinated through 'Lys-27' by TRIM23; involved in antiviral innate and inflammatory responses. Linear polyubiquitinated on Lys-111, Lys-143, Lys-226, Lys-246, Lys-270, Lys-278, Lys-285, Lys-295, Lys-302 and Lys-319; the head-to-tail polyubiquitination is mediated by the LUBAC complex and plays a key role in NF-kappa-B activation. Deubiquitinated by USP10 in a TANK-dependent and -independent manner, leading to the negative regulation of NF-kappa-B signaling upon DNA damage. Ubiquitinated at Lys-319 by MARCHF2 following bacterial and viral infection which leads to its degradation. Polyubiquitinated via 'Lys-29'-linked ubiquitin; leading to lysosomal degradation. Sumoylated on Lys-270 and Lys-302 with SUMO1; the modification results in phosphorylation of Ser-85 by ATM leading to a replacement of the sumoylation by mono-ubiquitination on these residues. In terms of processing, neddylated by TRIM40, resulting in stabilization of NFKBIA and down-regulation of NF-kappa-B activity.

It is found in the cytoplasm. Its subcellular location is the nucleus. Its function is as follows. Regulatory subunit of the IKK core complex which phosphorylates inhibitors of NF-kappa-B thus leading to the dissociation of the inhibitor/NF-kappa-B complex and ultimately the degradation of the inhibitor. Its binding to scaffolding polyubiquitin plays a key role in IKK activation by multiple signaling receptor pathways. Can recognize and bind both 'Lys-63'-linked and linear polyubiquitin upon cell stimulation, with a much highr affinity for linear polyubiquitin. Could be implicated in NF-kappa-B-mediated protection from cytokine toxicity. Essential for viral activation of IRF3. Involved in TLR3- and IFIH1-mediated antiviral innate response; this function requires 'Lys-27'-linked polyubiquitination. This is NF-kappa-B essential modulator (Ikbkg) from Rattus norvegicus (Rat).